A 283-amino-acid chain; its full sequence is Thymidylate synthase (283 aa).

Arg22 is a binding site for dUMP. The active-site Nucleophile is Cys160. DUMP contacts are provided by residues 180 to 183 (RSCD), Asn191, and 221 to 223 (HIY). Asp183 contributes to the (6R)-5,10-methylene-5,6,7,8-tetrahydrofolate binding site. Ser282 serves as a coordination point for (6R)-5,10-methylene-5,6,7,8-tetrahydrofolate.

It belongs to the thymidylate synthase family. Bacterial-type ThyA subfamily. In terms of assembly, homodimer.

Its subcellular location is the cytoplasm. It carries out the reaction dUMP + (6R)-5,10-methylene-5,6,7,8-tetrahydrofolate = 7,8-dihydrofolate + dTMP. It participates in pyrimidine metabolism; dTTP biosynthesis. Catalyzes the reductive methylation of 2'-deoxyuridine-5'-monophosphate (dUMP) to 2'-deoxythymidine-5'-monophosphate (dTMP) while utilizing 5,10-methylenetetrahydrofolate (mTHF) as the methyl donor and reductant in the reaction, yielding dihydrofolate (DHF) as a by-product. This enzymatic reaction provides an intracellular de novo source of dTMP, an essential precursor for DNA biosynthesis. The chain is Thymidylate synthase from Vibrio parahaemolyticus serotype O3:K6 (strain RIMD 2210633).